A 64-amino-acid polypeptide reads, in one-letter code: Large ribosomal subunit protein bL35c (64 aa).

It belongs to the bacterial ribosomal protein bL35 family.

It localises to the plastid. The protein localises to the chloroplast. The protein is Large ribosomal subunit protein bL35c of Phaeodactylum tricornutum (strain CCAP 1055/1).